The chain runs to 199 residues: Nucleoside triphosphate pyrophosphatase (199 aa).

Asp-76 functions as the Proton acceptor in the catalytic mechanism.

It belongs to the Maf family. A divalent metal cation serves as cofactor.

It is found in the cytoplasm. It carries out the reaction a ribonucleoside 5'-triphosphate + H2O = a ribonucleoside 5'-phosphate + diphosphate + H(+). It catalyses the reaction a 2'-deoxyribonucleoside 5'-triphosphate + H2O = a 2'-deoxyribonucleoside 5'-phosphate + diphosphate + H(+). Its function is as follows. Nucleoside triphosphate pyrophosphatase. May have a dual role in cell division arrest and in preventing the incorporation of modified nucleotides into cellular nucleic acids. The protein is Nucleoside triphosphate pyrophosphatase of Ruegeria sp. (strain TM1040) (Silicibacter sp.).